The sequence spans 147 residues: UPF0306 protein YPTB0506 (147 aa).

It belongs to the UPF0306 family.

In Yersinia pseudotuberculosis serotype I (strain IP32953), this protein is UPF0306 protein YPTB0506.